The following is a 156-amino-acid chain: Arginine repressor (156 aa).

This sequence belongs to the ArgR family.

Its subcellular location is the cytoplasm. Its pathway is amino-acid biosynthesis; L-arginine biosynthesis [regulation]. Functionally, regulates arginine biosynthesis genes. The sequence is that of Arginine repressor from Yersinia enterocolitica serotype O:8 / biotype 1B (strain NCTC 13174 / 8081).